The primary structure comprises 402 residues: MSKLSLSSLDKTNLEGKKVLVRVDFNVPLNEDGQITDDTRIRAAIPTIEYLINHSAKVILAAHFGRPKGQVNEKMRLTPVAARLSELLGQNVALTNSCIGDEAVAQSNSLSNGDVLLLENVRFFGEEEKNDLEFAKKLASHADMYVNDAFGAAHRAHASTQGVTNYLSPSVAGFLLEKELKYLQGAIDSPKRPLAAIVGGSKVSSKIGVLDSLLDKCDKIMIGGGMIFTFYKARGLDVGKSLVEEDKLELAKDLEAKAKAKGVELLLPTDVVLADEFSPDANSKISQIDSISGNWMGLDIGPDSIKVFQNALAECKTIIWNGPMGVFEFDKFADGTNAIATTLADLSAFSEVCTIIGGGDSVAAVEKAGLAEKMSHISTGGGASLELLEGKTLPGVAALNDA.

Residues 24 to 26 (DFN), Arg40, 63 to 66 (HFGR), Arg122, and Arg155 each bind substrate. Residues Lys206, Gly297, Glu328, and 358-361 (GGDS) contribute to the ATP site.

Belongs to the phosphoglycerate kinase family. Monomer.

It is found in the cytoplasm. The enzyme catalyses (2R)-3-phosphoglycerate + ATP = (2R)-3-phospho-glyceroyl phosphate + ADP. The protein operates within carbohydrate degradation; glycolysis; pyruvate from D-glyceraldehyde 3-phosphate: step 2/5. The protein is Phosphoglycerate kinase of Prochlorococcus marinus (strain MIT 9312).